We begin with the raw amino-acid sequence, 363 residues long: Small ribosomal subunit biogenesis GTPase RsgA (363 aa).

The CP-type G domain occupies 112–268; it reads HQQVIAANID…LIDTPGMREL (157 aa). Residues 157–160 and 210–218 each bind GTP; these read TKAD and GSSGAGKST. Residues C291, C296, H298, and C304 each coordinate Zn(2+). Positions 340 to 363 are disordered; that stretch reads RVAQNNRGKGSGKRPASVDRPGRR.

Belongs to the TRAFAC class YlqF/YawG GTPase family. RsgA subfamily. As to quaternary structure, monomer. Associates with 30S ribosomal subunit, binds 16S rRNA. Zn(2+) serves as cofactor.

It localises to the cytoplasm. One of several proteins that assist in the late maturation steps of the functional core of the 30S ribosomal subunit. Helps release RbfA from mature subunits. May play a role in the assembly of ribosomal proteins into the subunit. Circularly permuted GTPase that catalyzes slow GTP hydrolysis, GTPase activity is stimulated by the 30S ribosomal subunit. In Xanthomonas euvesicatoria pv. vesicatoria (strain 85-10) (Xanthomonas campestris pv. vesicatoria), this protein is Small ribosomal subunit biogenesis GTPase RsgA.